The following is a 368-amino-acid chain: Core histone macro-H2A.1 (368 aa).

A Histone H2A domain is found at 2–117; sequence SSRGGKKKST…NIHPELLAKK (116 aa). N6-lactoyllysine; alternate is present on residues lysine 7 and lysine 9. Lysine 18 is modified (N6-methyllysine). The residue at position 116 (lysine 116) is an N6-acetyllysine; alternate. A Glycyl lysine isopeptide (Lys-Gly) (interchain with G-Cter in ubiquitin); alternate cross-link involves residue lysine 116. Residue lysine 117 forms a Glycyl lysine isopeptide (Lys-Gly) (interchain with G-Cter in ubiquitin) linkage. At lysine 123 the chain carries N6-acetyllysine; alternate. Lysine 123 carries the post-translational modification N6,N6-dimethyllysine; alternate. Lysine 123 is covalently cross-linked (Glycyl lysine isopeptide (Lys-Gly) (interchain with G-Cter in SUMO2); alternate). Residues 128-179 are disordered; that stretch reads ITPPPAKKAKSPSQKKPVAKKTGGKKGARKSKKQGEVSKAASADSTTEGAPT. A Phosphothreonine modification is found at threonine 129. Basic residues predominate over residues 144-159; sequence PVAKKTGGKKGARKSK. A Glycyl lysine isopeptide (Lys-Gly) (interchain with G-Cter in SUMO2) cross-link involves residue lysine 166. Serine 169 and serine 172 each carry phosphoserine. A Macro domain is found at 183–366; the sequence is TVLSTKSLFL…IYVQEMAKLD (184 aa). Residue lysine 188 forms a Glycyl lysine isopeptide (Lys-Gly) (interchain with G-Cter in SUMO2) linkage. 8 residues coordinate a glycoprotein: aspartate 202, isoleucine 203, valine 225, serine 274, glycine 311, serine 312, glycine 313, and asparagine 315. A Glycyl lysine isopeptide (Lys-Gly) (interchain with G-Cter in SUMO2) cross-link involves residue lysine 319.

This sequence belongs to the histone H2A family. The nucleosome is a histone octamer containing two molecules each of H2A, H2B, H3 and H4 assembled in one H3-H4 heterotetramer and two H2A-H2B heterodimers. Interacts with HDAC1 and HDAC2. Interacts with SPOP. Part of a complex consisting of MACROH2A1, CUL3 and SPOP. In terms of assembly, interacts with PARP1. In terms of processing, monoubiquitinated at either Lys-116 or Lys-117. May also be polyubiquitinated. Ubiquitination is mediated by the CUL3/SPOP E3 complex and does not promote proteasomal degradation. Instead, it is required for enrichment in inactive X chromosome chromatin. As to expression, present only in liver and brain (at protein level). In terms of tissue distribution, present in brain, thymus, testis, liver and kidney (at protein level).

The protein resides in the nucleus. It is found in the chromosome. Its function is as follows. Variant histone H2A which replaces conventional H2A in a subset of nucleosomes where it represses transcription. Nucleosomes wrap and compact DNA into chromatin, limiting DNA accessibility to the cellular machineries which require DNA as a template. Histones thereby play a central role in transcription regulation, DNA repair, DNA replication and chromosomal stability. DNA accessibility is regulated via a complex set of post-translational modifications of histones, also called histone code, and nucleosome remodeling. Involved in stable X chromosome inactivation. Inhibits the binding of transcription factors, including NF-kappa-B, and interferes with the activity of remodeling SWI/SNF complexes. Inhibits histone acetylation by EP300 and recruits class I HDACs, which induces a hypoacetylated state of chromatin. Isoform that specifically binds poly-ADP-ribose and O-acetyl-ADP-ribose and plays a key role in NAD(+) metabolism. Able to bind to the ends of poly-ADP-ribose chains created by PARP1 and cap them. This prevents PARP1 from further addition of ADP-ribose and thus limits the consumption of nuclear NAD(+), allowing the cell to maintain proper NAD(+) levels in both the nucleus and the mitochondria to promote proper mitochondrial respiration. Increases the expression of genes involved in redox metabolism, including SOD3. Functionally, in contrast to isoform 1, does not bind poly-ADP-ribose. Represses SOD3 gene expression. The protein is Core histone macro-H2A.1 of Rattus norvegicus (Rat).